Here is a 91-residue protein sequence, read N- to C-terminus: uncharacterized protein (91 aa).

The first 20 residues, 1-20 (MFSRVLALLAVLLLSANTWA), serve as a signal peptide directing secretion.

Belongs to the BhsA/McbA family.

The protein resides in the periplasm. This is an uncharacterized protein from Escherichia coli O157:H7.